Reading from the N-terminus, the 160-residue chain is Ureidoglycolate lyase (160 aa).

It belongs to the ureidoglycolate lyase family. In terms of assembly, homodimer. Ni(2+) is required as a cofactor.

It catalyses the reaction (S)-ureidoglycolate = urea + glyoxylate. The protein operates within nitrogen metabolism; (S)-allantoin degradation. Catalyzes the catabolism of the allantoin degradation intermediate (S)-ureidoglycolate, generating urea and glyoxylate. Involved in the anaerobic utilization of allantoin as sole nitrogen source. Reinforces the induction of genes involved in the degradation of allantoin and glyoxylate by producing glyoxylate. The protein is Ureidoglycolate lyase of Escherichia coli (strain K12 / MC4100 / BW2952).